We begin with the raw amino-acid sequence, 331 residues long: Holliday junction branch migration complex subunit RuvB (331 aa).

The tract at residues 1–178 (MRNSIFEQEE…FGITLRLDFY (178 aa)) is large ATPase domain (RuvB-L). Residues Leu-17, Arg-18, Gly-59, Lys-62, Thr-63, Thr-64, 125–127 (EDY), Arg-168, Tyr-178, and Arg-215 each bind ATP. Mg(2+) is bound at residue Thr-63. Residues 179-249 (TVSELLQLLQ…FADLALNKME (71 aa)) form a small ATPAse domain (RuvB-S) region. A head domain (RuvB-H) region spans residues 252–331 (QFGLDKLDYT…LSTINSARLP (80 aa)). 2 residues coordinate DNA: Arg-307 and Arg-312.

The protein belongs to the RuvB family. As to quaternary structure, homohexamer. Forms an RuvA(8)-RuvB(12)-Holliday junction (HJ) complex. HJ DNA is sandwiched between 2 RuvA tetramers; dsDNA enters through RuvA and exits via RuvB. An RuvB hexamer assembles on each DNA strand where it exits the tetramer. Each RuvB hexamer is contacted by two RuvA subunits (via domain III) on 2 adjacent RuvB subunits; this complex drives branch migration. In the full resolvosome a probable DNA-RuvA(4)-RuvB(12)-RuvC(2) complex forms which resolves the HJ.

It localises to the cytoplasm. The catalysed reaction is ATP + H2O = ADP + phosphate + H(+). In terms of biological role, the RuvA-RuvB-RuvC complex processes Holliday junction (HJ) DNA during genetic recombination and DNA repair, while the RuvA-RuvB complex plays an important role in the rescue of blocked DNA replication forks via replication fork reversal (RFR). RuvA specifically binds to HJ cruciform DNA, conferring on it an open structure. The RuvB hexamer acts as an ATP-dependent pump, pulling dsDNA into and through the RuvAB complex. RuvB forms 2 homohexamers on either side of HJ DNA bound by 1 or 2 RuvA tetramers; 4 subunits per hexamer contact DNA at a time. Coordinated motions by a converter formed by DNA-disengaged RuvB subunits stimulates ATP hydrolysis and nucleotide exchange. Immobilization of the converter enables RuvB to convert the ATP-contained energy into a lever motion, pulling 2 nucleotides of DNA out of the RuvA tetramer per ATP hydrolyzed, thus driving DNA branch migration. The RuvB motors rotate together with the DNA substrate, which together with the progressing nucleotide cycle form the mechanistic basis for DNA recombination by continuous HJ branch migration. Branch migration allows RuvC to scan DNA until it finds its consensus sequence, where it cleaves and resolves cruciform DNA. This is Holliday junction branch migration complex subunit RuvB from Neorickettsia sennetsu (strain ATCC VR-367 / Miyayama) (Ehrlichia sennetsu).